A 197-amino-acid chain; its full sequence is Protein GrpE (197 aa).

The segment covering 1 to 27 has biased composition (basic and acidic residues); that stretch reads MSNKEQHIEKEEQLQEEKHEEQQKTEE. A disordered region spans residues 1-34; it reads MSNKEQHIEKEEQLQEEKHEEQQKTEETEVEAVN.

The protein belongs to the GrpE family. As to quaternary structure, homodimer.

It is found in the cytoplasm. Its function is as follows. Participates actively in the response to hyperosmotic and heat shock by preventing the aggregation of stress-denatured proteins, in association with DnaK and GrpE. It is the nucleotide exchange factor for DnaK and may function as a thermosensor. Unfolded proteins bind initially to DnaJ; upon interaction with the DnaJ-bound protein, DnaK hydrolyzes its bound ATP, resulting in the formation of a stable complex. GrpE releases ADP from DnaK; ATP binding to DnaK triggers the release of the substrate protein, thus completing the reaction cycle. Several rounds of ATP-dependent interactions between DnaJ, DnaK and GrpE are required for fully efficient folding. This Pasteurella multocida (strain Pm70) protein is Protein GrpE.